Consider the following 164-residue polypeptide: Phosphopantetheine adenylyltransferase (164 aa).

Ser11 is a substrate binding site. ATP contacts are provided by residues 11 to 12 (SF) and His19. Positions 43, 76, and 90 each coordinate substrate. ATP-binding positions include 91 to 93 (GLR), Glu101, and 126 to 132 (YQHISSS).

Belongs to the bacterial CoaD family. In terms of assembly, homohexamer. The cofactor is Mg(2+).

It is found in the cytoplasm. The catalysed reaction is (R)-4'-phosphopantetheine + ATP + H(+) = 3'-dephospho-CoA + diphosphate. It participates in cofactor biosynthesis; coenzyme A biosynthesis; CoA from (R)-pantothenate: step 4/5. Its function is as follows. Reversibly transfers an adenylyl group from ATP to 4'-phosphopantetheine, yielding dephospho-CoA (dPCoA) and pyrophosphate. The sequence is that of Phosphopantetheine adenylyltransferase from Streptococcus gordonii (strain Challis / ATCC 35105 / BCRC 15272 / CH1 / DL1 / V288).